The chain runs to 209 residues: UPF0502 protein PSHAa0076 (209 aa).

It belongs to the UPF0502 family.

The sequence is that of UPF0502 protein PSHAa0076 from Pseudoalteromonas translucida (strain TAC 125).